We begin with the raw amino-acid sequence, 954 residues long: Alpha-xylosidase BoGH31A (954 aa).

A signal peptide spans 1 to 20 (MIMNMKNIFYCLLPGLLLGA). C21 carries the N-palmitoyl cysteine lipid modification. A lipid anchor (S-diacylglycerol cysteine) is attached at C21. Residues 227–366 (TGQEGALTGT…NPEEQGKQSW (140 aa)) form the PA14 domain. Residues D553 and E556 contribute to the active site. Catalysis depends on D630, which acts as the Proton donor.

Belongs to the glycosyl hydrolase 31 family.

It is found in the cell inner membrane. It catalyses the reaction Hydrolysis of terminal, non-reducing alpha-D-xylose residues with release of alpha-D-xylose.. It participates in glucan metabolism; xyloglucan degradation. Functionally, catalyzes the liberation of alpha-xylose from the non-reducing terminal glucose of xyloglucan oligosaccharides in xyloglucan degradation, converting the 'X' to 'G' units. The protein is Alpha-xylosidase BoGH31A of Bacteroides ovatus (strain ATCC 8483 / DSM 1896 / JCM 5824 / BCRC 10623 / CCUG 4943 / NCTC 11153).